Consider the following 731-residue polypeptide: Inclusion body clearance protein IML2 (731 aa).

A disordered region spans residues 1 to 26; sequence MFRVFGSFGSKGNQSSGEEQSTKTKQ. Over residues 10 to 26 the composition is skewed to polar residues; that stretch reads SKGNQSSGEEQSTKTKQ. A phosphoserine mark is found at serine 265, serine 268, and serine 378. Threonine 380 carries the post-translational modification Phosphothreonine. Serine 383 and serine 392 each carry phosphoserine.

This sequence belongs to the IML2 family. Interacts with lipid droplet proteins PET10 and PDR16.

The protein localises to the cytoplasm. It is found in the nucleus. In terms of biological role, inclusion body (IB) resident protein that interacts strongly with lipid droplet (LD) proteins. Involved in LD-mediated IB clearing after protein folding stress, probably by enabling access to the IBs of an LD-stored soluble sterol derivative that acts as a chaperone in inclusion clearing. In Saccharomyces cerevisiae (strain ATCC 204508 / S288c) (Baker's yeast), this protein is Inclusion body clearance protein IML2.